Here is a 245-residue protein sequence, read N- to C-terminus: 14-3-3 protein theta (245 aa).

The residue at position 1 (methionine 1) is an N-acetylmethionine. Lysine 3 carries the post-translational modification N6-acetyllysine. Lysine 49 is modified (N6-acetyllysine; alternate). Lysine 49 participates in a covalent cross-link: Glycyl lysine isopeptide (Lys-Gly) (interchain with G-Cter in SUMO2); alternate. Lysine 68 is modified (N6-acetyllysine). Tyrosine 82 carries the post-translational modification 3'-nitrotyrosine. The residue at position 92 (serine 92) is a Phosphoserine. Residue tyrosine 104 is modified to 3'-nitrotyrosine. Position 115 is an N6-acetyllysine (lysine 115). A Phosphoserine; by CK1 modification is found at serine 232.

It belongs to the 14-3-3 family. As to quaternary structure, homodimer. Interacts with CDKN1B ('Thr-198' phosphorylated form); the interaction translocates CDKN1B to the cytoplasm. Interacts with SSH1. Interacts with GAB2. Interacts with RGS7 (phosphorylated form). Interacts with CDK16. Interacts with the 'Ser-241' phosphorylated form of PDPK1. Interacts with the 'Thr-369' phosphorylated form of DAPK2. Interacts with PI4KB, TBC1D22A and TBC1D22B. Interacts with SLITRK1. Interacts with RIPOR2. Interacts with INAVA; the interaction increases upon PRR (pattern recognition receptor) stimulation and is required for cellular signaling pathway activation and cytokine secretion. Interacts with MARK2, MARK3 and MARK4. Interacts with MEFV.

Its subcellular location is the cytoplasm. Adapter protein implicated in the regulation of a large spectrum of both general and specialized signaling pathways. Binds to a large number of partners, usually by recognition of a phosphoserine or phosphothreonine motif. Binding generally results in the modulation of the activity of the binding partner. Negatively regulates the kinase activity of PDPK1. In Mus musculus (Mouse), this protein is 14-3-3 protein theta (Ywhaq).